Reading from the N-terminus, the 162-residue chain is MLKRCLWLVVTVLFAWQVFNGTAIAAQLDATTRTVALNDQGKNITLSRRQVEDGQRLFNEACASCHAGGITKTNPSLDLSPETLALATPRRDSVAGLVDYMKDPTTYDGEDSIAEIHPSIKSADIYPKMRNLSEQDLTAIAGYILVQPKVQGEKWGGGKIYF.

Positions 1 to 25 (MLKRCLWLVVTVLFAWQVFNGTAIA) are cleaved as a signal peptide. Heme c contacts are provided by Cys-62, Cys-65, His-66, and His-117.

Belongs to the cytochrome c family. PsbV subfamily. In terms of assembly, PSII is composed of 1 copy each of membrane proteins PsbA, PsbB, PsbC, PsbD, PsbE, PsbF, PsbH, PsbI, PsbJ, PsbK, PsbL, PsbM, PsbT, PsbX, PsbY, PsbZ, Psb30/Ycf12, peripheral proteins PsbO, CyanoQ (PsbQ), PsbU, PsbV and a large number of cofactors. It forms dimeric complexes. Heme c is required as a cofactor.

The protein resides in the cellular thylakoid membrane. Its function is as follows. One of the extrinsic, lumenal subunits of photosystem II (PSII). PSII is a light-driven water plastoquinone oxidoreductase, using light energy to abstract electrons from H(2)O, generating a proton gradient subsequently used for ATP formation. The extrinsic proteins stabilize the structure of photosystem II oxygen-evolving complex (OEC), the ion environment of oxygen evolution and protect the OEC against heat-induced inactivation. Low-potential cytochrome c that plays a role in the OEC of PSII. In Cyanothece sp. (strain PCC 7425 / ATCC 29141), this protein is Photosystem II extrinsic protein V.